A 361-amino-acid polypeptide reads, in one-letter code: MGSISNNSGSEDCESREWLPSGESPAISSAMFSAGVLGNLIALALLARRWRGDAGRRAGRGNSISLFHVLVTELVFTDLLGTCLISPVVLASYARNQTLMALEPERRACTYFAFAMTFFSLATMLMLFAMALERYLSIGRPYFYQRHVTRRGGLAVLPTIYTVSLLFCSLPLLGYGQYVQYCPGTWCFIRHGRTAYLQLYATLLLLLIVAVLACNFSVILNLIRMHRRSGRSRCGPSLGSCRDGSGTRRRGERVSVAEETDHLILLAIMTITFAICSLPFTIFAYMNETSSRREKWDLQALRFLSINSIIDPWVFAIFRPPVLRLMRSVLCCRVSLRAQDATQTSCSIQSNASRLTFVDTS.

A compositionally biased stretch (polar residues) spans 1-10 (MGSISNNSGS). The interval 1–21 (MGSISNNSGSEDCESREWLPS) is disordered. Residues 1 to 23 (MGSISNNSGSEDCESREWLPSGE) are Extracellular-facing. An N-linked (GlcNAc...) asparagine glycan is attached at Asn-6. A helical membrane pass occupies residues 24–47 (SPAISSAMFSAGVLGNLIALALLA). The Cytoplasmic segment spans residues 48–65 (RRWRGDAGRRAGRGNSIS). Residues 66 to 91 (LFHVLVTELVFTDLLGTCLISPVVLA) traverse the membrane as a helical segment. Topologically, residues 92–111 (SYARNQTLMALEPERRACTY) are extracellular. The N-linked (GlcNAc...) asparagine glycan is linked to Asn-96. Cys-109 and Cys-187 are oxidised to a cystine. A helical membrane pass occupies residues 112–132 (FAFAMTFFSLATMLMLFAMAL). Topologically, residues 133–151 (ERYLSIGRPYFYQRHVTRR) are cytoplasmic. Residues 152–176 (GGLAVLPTIYTVSLLFCSLPLLGYG) traverse the membrane as a helical segment. The Extracellular portion of the chain corresponds to 177-198 (QYVQYCPGTWCFIRHGRTAYLQ). A helical transmembrane segment spans residues 199-223 (LYATLLLLLIVAVLACNFSVILNLI). Residues 224 to 262 (RMHRRSGRSRCGPSLGSCRDGSGTRRRGERVSVAEETDH) are Cytoplasmic-facing. Residues 230–253 (GRSRCGPSLGSCRDGSGTRRRGER) are disordered. A helical transmembrane segment spans residues 263–286 (LILLAIMTITFAICSLPFTIFAYM). A glycan (N-linked (GlcNAc...) asparagine) is linked at Asn-287. The Extracellular segment spans residues 287–299 (NETSSRREKWDLQ). The chain crosses the membrane as a helical span at residues 300-323 (ALRFLSINSIIDPWVFAIFRPPVL). Over 324 to 361 (RLMRSVLCCRVSLRAQDATQTSCSIQSNASRLTFVDTS) the chain is Cytoplasmic.

It belongs to the G-protein coupled receptor 1 family.

The protein localises to the cell membrane. Its function is as follows. Receptor for prostaglandin E2 (PGE2). The activity of this receptor is mediated by G(s) proteins that stimulate adenylate cyclase. The subsequent raise in intracellular cAMP is responsible for the relaxing effect of this receptor on smooth muscle. The sequence is that of Prostaglandin E2 receptor EP2 subtype (PTGER2) from Canis lupus familiaris (Dog).